Consider the following 162-residue polypeptide: UPF0114 protein PSEEN0819 (162 aa).

Helical transmembrane passes span 15 to 35 (LLAP…LKFF), 53 to 73 (LVLV…LVMV), and 136 to 156 (LMWY…MGYL).

This sequence belongs to the UPF0114 family.

The protein localises to the cell membrane. This is UPF0114 protein PSEEN0819 from Pseudomonas entomophila (strain L48).